The following is a 69-amino-acid chain: Small, acid-soluble spore protein C1 (69 aa).

It belongs to the alpha/beta-type SASP family.

In terms of biological role, SASP are bound to spore DNA. They are double-stranded DNA-binding proteins that cause DNA to change to an a-like conformation. They protect the DNA backbone from chemical and enzymatic cleavage and are thus involved in dormant spore's high resistance to UV light. This Priestia megaterium (Bacillus megaterium) protein is Small, acid-soluble spore protein C1 (SASP-C1).